The following is a 276-amino-acid chain: Diaminopimelate epimerase (276 aa).

Substrate-binding residues include N13, Q46, and N66. The active-site Proton donor is C75. Residues 76 to 77, N159, N192, and 210 to 211 contribute to the substrate site; these read GN and ER. The active-site Proton acceptor is C219. Substrate is bound at residue 220-221; that stretch reads GT.

This sequence belongs to the diaminopimelate epimerase family. Homodimer.

Its subcellular location is the cytoplasm. The enzyme catalyses (2S,6S)-2,6-diaminopimelate = meso-2,6-diaminopimelate. It participates in amino-acid biosynthesis; L-lysine biosynthesis via DAP pathway; DL-2,6-diaminopimelate from LL-2,6-diaminopimelate: step 1/1. Functionally, catalyzes the stereoinversion of LL-2,6-diaminopimelate (L,L-DAP) to meso-diaminopimelate (meso-DAP), a precursor of L-lysine and an essential component of the bacterial peptidoglycan. This is Diaminopimelate epimerase from Pseudomonas syringae pv. tomato (strain ATCC BAA-871 / DC3000).